We begin with the raw amino-acid sequence, 300 residues long: Probable acetyltransferase Rv3034c (300 aa).

Positions 1–25 (MNVLSLGSSSGVVWGRVPITAPAGA) are cleaved as a signal peptide.

Belongs to the transferase hexapeptide repeat family.

Its function is as follows. May be involved in the biosynthesis of 6-O-methylglucosyl-containing lipopolysaccharides (MGLP). In terms of biological role, regulates host peroxisome homeostasis in response to intracellular redox levels to favor mycobacterial infection in macrophage. Induces the expression of host peroxisome biogenesis and proliferation factors as well as peroxisome associated enzymes. Inhibits the induction of host pexophagy mechanism by down-regulating the expression of pexophagy associated proteins and adapter molecules in infected macrophages. However, during increased oxidative stress conditions, it induces degradation of dysfunctional and damaged peroxisomes. Regulation of peroxisome biogenesis and degradation is dependent upon host p-mTORC1 mediated signaling pathway. The sequence is that of Probable acetyltransferase Rv3034c from Mycobacterium tuberculosis (strain ATCC 25618 / H37Rv).